The primary structure comprises 146 residues: Ribosome-binding factor A (146 aa).

The tract at residues 113 to 146 (IRDEREAQEPAQDPAQDSSQDASVEASDAPDKAE) is disordered.

Belongs to the RbfA family. Monomer. Binds 30S ribosomal subunits, but not 50S ribosomal subunits or 70S ribosomes.

It is found in the cytoplasm. In terms of biological role, one of several proteins that assist in the late maturation steps of the functional core of the 30S ribosomal subunit. Associates with free 30S ribosomal subunits (but not with 30S subunits that are part of 70S ribosomes or polysomes). Required for efficient processing of 16S rRNA. May interact with the 5'-terminal helix region of 16S rRNA. This is Ribosome-binding factor A from Gemmatimonas aurantiaca (strain DSM 14586 / JCM 11422 / NBRC 100505 / T-27).